Consider the following 135-residue polypeptide: Protein KRTCAP2 homolog (135 aa).

4 helical membrane passes run 1–21 (MAVS…LLFA), 35–55 (PMAI…LTAI), 69–89 (TKLI…SGMV), and 93–113 (CITT…RISI).

Belongs to the KRTCAP2 family. As to quaternary structure, component of the oligosaccharyltransferase (OST) complex.

The protein localises to the membrane. In terms of biological role, subunit of the oligosaccharyl transferase (OST) complex that catalyzes the initial transfer of a defined glycan (Glc(3)Man(9)GlcNAc(2) in eukaryotes) from the lipid carrier dolichol-pyrophosphate to an asparagine residue within an Asn-X-Ser/Thr consensus motif in nascent polypeptide chains, the first step in protein N-glycosylation. N-glycosylation occurs cotranslationally and the complex associates with the Sec61 complex at the channel-forming translocon complex that mediates protein translocation across the endoplasmic reticulum (ER). All subunits are required for a maximal enzyme activity. The chain is Protein KRTCAP2 homolog from Ixodes scapularis (Black-legged tick).